Consider the following 443-residue polypeptide: ATP-dependent protease ATPase subunit HslU (443 aa).

ATP contacts are provided by residues Ile-20, 62–67 (GVGKTE), Asp-255, Glu-321, and Arg-393.

Belongs to the ClpX chaperone family. HslU subfamily. As to quaternary structure, a double ring-shaped homohexamer of HslV is capped on each side by a ring-shaped HslU homohexamer. The assembly of the HslU/HslV complex is dependent on binding of ATP.

The protein resides in the cytoplasm. Functionally, ATPase subunit of a proteasome-like degradation complex; this subunit has chaperone activity. The binding of ATP and its subsequent hydrolysis by HslU are essential for unfolding of protein substrates subsequently hydrolyzed by HslV. HslU recognizes the N-terminal part of its protein substrates and unfolds these before they are guided to HslV for hydrolysis. The polypeptide is ATP-dependent protease ATPase subunit HslU (Helicobacter pylori (strain J99 / ATCC 700824) (Campylobacter pylori J99)).